The primary structure comprises 779 residues: Transcriptional regulator QRICH1 (779 aa).

An N-acetylmethionine modification is found at Met-1. In terms of domain architecture, CARD spans 6–48; it reads ENTISFEEYIRVKARSVPQHRMKEFLDSLASKGPEALQEFQQT. Disordered stretches follow at residues 141 to 163 and 219 to 242; these read QGQAAQPAAPSIQTPSLQSPSPS and ALSPPPSQQGSPREGERRVGTASV. At Ser-346 the chain carries Phosphoserine. Glycyl lysine isopeptide (Lys-Gly) (interchain with G-Cter in SUMO2) cross-links involve residues Lys-354 and Lys-359. The span at 420-430 shows a compositional bias: low complexity; it reads QQQPQQQTPQE. Residues 420-443 form a disordered region; that stretch reads QQQPQQQTPQEQTPPPPQQQQQQQ. Position 467 is a phosphoserine (Ser-467).

It is found in the nucleus. The protein localises to the cytoplasm. Its subcellular location is the cell membrane. Its function is as follows. Transcriptional regulator that acts as a mediator of the integrated stress response (ISR) through transcriptional control of protein homeostasis under conditions of ER stress. Controls the outcome of the unfolded protein response (UPR), an ER-stress response pathway that either promotes recovery of ER homeostasis and cell survival, or triggers the terminal UPR which elicits programmed cell death when ER stress is prolonged and unresolved. ER stress induces QRICH1 translation by a ribosome translation re-initiation mechanism in response to EIF2S1/eIF-2-alpha phosphorylation, and stress-induced QRICH1 regulates a transcriptional program associated with protein translation, protein secretion-mediated proteotoxicity and cell death during the terminal UPR. May cooperate with ATF4 transcription factor signaling to regulate ER homeostasis which is critical for cell viability. Up-regulates CASP3/caspase-3 activity in epithelial cells under ER stress. Central regulator of proteotoxicity associated with ER stress-mediated inflammatory diseases in the intestines and liver. Involved in chondrocyte hypertrophy, a process required for normal longitudinal bone growth. The chain is Transcriptional regulator QRICH1 (QRICH1) from Bos taurus (Bovine).